The following is a 952-amino-acid chain: Protein translocase subunit SecA (952 aa).

Residues glutamine 135, 153 to 157 (GEGKT), and aspartate 575 contribute to the ATP site. A compositionally biased stretch (low complexity) spans 907–921 (AAPAAAIPGVSAKAA). Residues 907–946 (AAPAAAIPGVSAKAATQSTTPAAKEIGRNDPCPCGSGKKY) form a disordered region. Cysteine 938, cysteine 940, cysteine 949, and cysteine 950 together coordinate Zn(2+).

The protein belongs to the SecA family. In terms of assembly, monomer and homodimer. Part of the essential Sec protein translocation apparatus which comprises SecA, SecYEG and auxiliary proteins SecDF. Other proteins may also be involved. Zn(2+) is required as a cofactor.

It is found in the cell membrane. Its subcellular location is the cytoplasm. The enzyme catalyses ATP + H2O + cellular proteinSide 1 = ADP + phosphate + cellular proteinSide 2.. In terms of biological role, part of the Sec protein translocase complex. Interacts with the SecYEG preprotein conducting channel. Has a central role in coupling the hydrolysis of ATP to the transfer of proteins into and across the cell membrane, serving as an ATP-driven molecular motor driving the stepwise translocation of polypeptide chains across the membrane. The polypeptide is Protein translocase subunit SecA (Dehalococcoides mccartyi (strain CBDB1)).